Reading from the N-terminus, the 616-residue chain is Chaperone protein HtpG (616 aa).

The interval 1-334 (MTIKQTHSFQ…TADLSLNLSR (334 aa)) is a; substrate-binding. The interval 335–549 (EILQDNKVIK…ENEMGGNMER (215 aa)) is b. The interval 550–616 (IMKSLGQDIP…FVKRINKLIN (67 aa)) is c.

This sequence belongs to the heat shock protein 90 family. As to quaternary structure, homodimer.

The protein localises to the cytoplasm. Molecular chaperone. Has ATPase activity. This Vesicomyosocius okutanii subsp. Calyptogena okutanii (strain HA) protein is Chaperone protein HtpG.